Reading from the N-terminus, the 100-residue chain is Urease subunit gamma (100 aa).

The protein belongs to the urease gamma subunit family. As to quaternary structure, heterotrimer of UreA (gamma), UreB (beta) and UreC (alpha) subunits. Three heterotrimers associate to form the active enzyme.

The protein resides in the cytoplasm. The enzyme catalyses urea + 2 H2O + H(+) = hydrogencarbonate + 2 NH4(+). It functions in the pathway nitrogen metabolism; urea degradation; CO(2) and NH(3) from urea (urease route): step 1/1. The polypeptide is Urease subunit gamma (Haemophilus influenzae (strain PittEE)).